A 503-amino-acid polypeptide reads, in one-letter code: UDP-N-acetylmuramoylalanine--D-glutamate ligase (503 aa).

Residue 129-135 participates in ATP binding; the sequence is GTNGKTT. Positions 284–305 are disordered; it reads DSEAEGEGKPRRRKADATAQEA.

It belongs to the MurCDEF family.

Its subcellular location is the cytoplasm. The catalysed reaction is UDP-N-acetyl-alpha-D-muramoyl-L-alanine + D-glutamate + ATP = UDP-N-acetyl-alpha-D-muramoyl-L-alanyl-D-glutamate + ADP + phosphate + H(+). Its pathway is cell wall biogenesis; peptidoglycan biosynthesis. In terms of biological role, cell wall formation. Catalyzes the addition of glutamate to the nucleotide precursor UDP-N-acetylmuramoyl-L-alanine (UMA). In Cupriavidus pinatubonensis (strain JMP 134 / LMG 1197) (Cupriavidus necator (strain JMP 134)), this protein is UDP-N-acetylmuramoylalanine--D-glutamate ligase.